Here is an 80-residue protein sequence, read N- to C-terminus: Exodeoxyribonuclease 7 small subunit (80 aa).

This sequence belongs to the XseB family. Heterooligomer composed of large and small subunits.

Its subcellular location is the cytoplasm. The catalysed reaction is Exonucleolytic cleavage in either 5'- to 3'- or 3'- to 5'-direction to yield nucleoside 5'-phosphates.. Functionally, bidirectionally degrades single-stranded DNA into large acid-insoluble oligonucleotides, which are then degraded further into small acid-soluble oligonucleotides. In Pseudomonas putida (strain W619), this protein is Exodeoxyribonuclease 7 small subunit.